We begin with the raw amino-acid sequence, 149 residues long: Calmodulin-3 (149 aa).

An N-acetylalanine modification is found at Ala-2. EF-hand domains lie at 8 to 43 (DQIAEFKEAFSLFDKDGDGCITTKELGTVMRSLGQN), 44 to 79 (PTEAELQDMINEVDADGNGTIDFPEFLNLMARKMKD), 81 to 116 (DSEEELKEAFRVFDKDQNGFISAAELRHVMTNLGEK), and 117 to 149 (LTDEEVEEMIREADVDGDGQINYDEFVKVMMAK). Ca(2+)-binding residues include Asp-21, Asp-23, Asp-25, Cys-27, Glu-32, Asp-57, Asp-59, Asn-61, Thr-63, Glu-68, Asp-94, Asp-96, Asn-98, and Glu-105. Lys-116 bears the N6,N6,N6-trimethyllysine mark. 5 residues coordinate Ca(2+): Asp-130, Asp-132, Asp-134, Gln-136, and Glu-141.

Belongs to the calmodulin family.

Its function is as follows. Calmodulin mediates the control of a large number of enzymes, ion channels and other proteins by Ca(2+). Among the enzymes to be stimulated by the calmodulin-Ca(2+) complex are a number of protein kinases and phosphatases. This Oryza sativa subsp. japonica (Rice) protein is Calmodulin-3 (CAM3).